The primary structure comprises 750 residues: Sulfhydryl oxidase 1 (750 aa).

Positions 1 to 32 are cleaved as a signal peptide; sequence MRRCGRHSGPPSLLLLLLLLPPLLLSVPGAYA. Residues 33 to 159 form the Thioredoxin domain; the sequence is ARLSVLYSSS…RMRLIDALES (127 aa). Active-site nucleophile residues include C73 and C76. 2 cysteine pairs are disulfide-bonded: C73–C76 and C104–C113. N-linked (GlcNAc...) asparagine glycosylation is found at N133 and N246. C396 and C408 are oxidised to a cystine. Positions 399–506 constitute an ERV/ALR sulfhydryl oxidase domain; it reads SEPHFRGFPC…EDPQFPKVQW (108 aa). FAD-binding positions include R404, W411, H415, D454, H458, 481-488, K503, and W506; that span reads WTSHNRVN. C452 and C455 are joined by a disulfide. A disulfide bond links C512 and C515. Disordered regions lie at residues 545–567 and 585–632; these read VRDP…ASPN and EQAA…PEHT. A compositionally biased stretch (low complexity) spans 587–597; the sequence is AASAASPGATA. Residues 710–730 traverse the membrane as a helical segment; it reads FLDISLCVGLYSVSFMGLLAM.

This sequence belongs to the quiescin-sulfhydryl oxidase (QSOX) family. Monomer. FAD serves as cofactor. Post-translationally, N-glycosylated. O-glycosylated on Thr and Ser residues. In terms of tissue distribution, isoform 3: Detected in seminal vesicle fluid (at protein level). Isoform 1: Detected in brain, hypophysis, heart, testis and the seminal vesicle. Isoform 3: Highly expressed in the seminal vesicles followed by testis, heart, brain, thymus, hypophysis and lung. Also expressed in prostate, kidney, spleen, liver.

The protein localises to the golgi apparatus membrane. It is found in the secreted. The enzyme catalyses 2 R'C(R)SH + O2 = R'C(R)S-S(R)CR' + H2O2. Its function is as follows. Catalyzes the oxidation of sulfhydryl groups in peptide and protein thiols to disulfides with the reduction of oxygen to hydrogen peroxide. Plays a role in disulfide bond formation in a variety of extracellular proteins. In fibroblasts, required for normal incorporation of laminin into the extracellular matrix, and thereby for normal cell-cell adhesion and cell migration. The polypeptide is Sulfhydryl oxidase 1 (Qsox1) (Rattus norvegicus (Rat)).